A 383-amino-acid chain; its full sequence is Chaperone protein DnaJ (383 aa).

In terms of domain architecture, J spans 4–68; sequence DLYETLNVSR…DQRARYDRFG (65 aa). The CR-type zinc finger occupies 139-221; sequence GGEKEITINH…CSGRGRNQKQ (83 aa). Zn(2+) is bound by residues Cys152, Cys155, Cys169, Cys172, Cys195, Cys198, Cys209, and Cys212. 4 CXXCXGXG motif repeats span residues 152–159, 169–176, 195–202, and 209–216; these read CETCRGSG, CRNCGGQG, CPNCQGTG, and CPTCSGRG.

The protein belongs to the DnaJ family. In terms of assembly, homodimer. Zn(2+) is required as a cofactor.

Its subcellular location is the cytoplasm. Participates actively in the response to hyperosmotic and heat shock by preventing the aggregation of stress-denatured proteins and by disaggregating proteins, also in an autonomous, DnaK-independent fashion. Unfolded proteins bind initially to DnaJ; upon interaction with the DnaJ-bound protein, DnaK hydrolyzes its bound ATP, resulting in the formation of a stable complex. GrpE releases ADP from DnaK; ATP binding to DnaK triggers the release of the substrate protein, thus completing the reaction cycle. Several rounds of ATP-dependent interactions between DnaJ, DnaK and GrpE are required for fully efficient folding. Also involved, together with DnaK and GrpE, in the DNA replication of plasmids through activation of initiation proteins. This chain is Chaperone protein DnaJ, found in Gloeobacter violaceus (strain ATCC 29082 / PCC 7421).